The primary structure comprises 271 residues: MLLTVDVRNTNIVLGLFTGTGEHSKLVQDWRMRTDARMTADELALIFRGLLGAHTDQITGVSALSTVPSVLREIRVMLTRYWGHVPHVLVEPGVRTGVPLLVDNPKEVGADRIVNSLAAHHLYDAPCIVVDFGTSTCVDVVSAKGEFLGGAIAPGLEISSDALASQSAALRKVELVRPRSVVGKNTVECMQSGAVFGFAGLVDGLVRRVRRELPAFSGSDVVVIATGDRAPLIMPETETVDEHEPDLTLEGLRLVYERNQARRGARRSPLD.

6–13 (DVRNTNIV) contributes to the ATP binding site. A substrate-binding site is contributed by 109 to 112 (GADR). Catalysis depends on Asp111, which acts as the Proton acceptor. Asp131 is a binding site for K(+). An ATP-binding site is contributed by Thr134. Thr186 contacts substrate.

The protein belongs to the type III pantothenate kinase family. As to quaternary structure, homodimer. NH4(+) is required as a cofactor. K(+) serves as cofactor.

The protein localises to the cytoplasm. It carries out the reaction (R)-pantothenate + ATP = (R)-4'-phosphopantothenate + ADP + H(+). It participates in cofactor biosynthesis; coenzyme A biosynthesis; CoA from (R)-pantothenate: step 1/5. In terms of biological role, catalyzes the phosphorylation of pantothenate (Pan), the first step in CoA biosynthesis. The sequence is that of Type III pantothenate kinase from Rhodococcus opacus (strain B4).